The chain runs to 487 residues: UDP-glycosyltransferase 85A7 (487 aa).

Residues 364 to 366, 381 to 389, and 403 to 406 contribute to the UDP-alpha-D-glucose site; these read CPQ, HCGWNSTLE, and FSEQ.

This sequence belongs to the UDP-glycosyltransferase family. As to expression, expressed in roots, shoots, leaves and flowers.

This chain is UDP-glycosyltransferase 85A7 (UGT85A7), found in Arabidopsis thaliana (Mouse-ear cress).